The primary structure comprises 235 residues: Glycerol uptake facilitator protein 2 (235 aa).

6 helical membrane-spanning segments follow: residues 4–24, 39–59, 62–82, 83–103, 134–154, and 165–185; these read FLGE…SGAA, FICL…GQFG, GHLN…PMAN, VWPY…IVII, VFNF…LLNL, and MVGL…GFAI. The NPA 1 signature appears at 65 to 67; the sequence is NPA. The NPA 2 signature appears at 186–188; it reads NPA. Residues 210–230 form a helical membrane-spanning segment; the sequence is WGYAWVPMFGPLLGGILAAGL.

This sequence belongs to the MIP/aquaporin (TC 1.A.8) family.

The protein resides in the cell membrane. Functionally, transporter that facilitates the transmembrane diffusion of water, dihydroxyacetone, glycerol and H(2)O(2). Is not permeable to urea and D/L-lactic acid. This Lactiplantibacillus plantarum (strain ATCC BAA-793 / NCIMB 8826 / WCFS1) (Lactobacillus plantarum) protein is Glycerol uptake facilitator protein 2.